Reading from the N-terminus, the 102-residue chain is Small ribosomal subunit protein uS10 (102 aa).

The protein belongs to the universal ribosomal protein uS10 family. Part of the 30S ribosomal subunit.

Involved in the binding of tRNA to the ribosomes. The polypeptide is Small ribosomal subunit protein uS10 (Streptococcus pneumoniae (strain CGSP14)).